A 207-amino-acid polypeptide reads, in one-letter code: Enolase (207 aa).

Residue Gln-162 coordinates (2R)-2-phosphoglycerate. The Proton donor role is filled by Glu-204.

The protein belongs to the enolase family.

The protein localises to the cytoplasm. The protein resides in the secreted. It localises to the cell surface. It carries out the reaction (2R)-2-phosphoglycerate = phosphoenolpyruvate + H2O. The protein operates within carbohydrate degradation; glycolysis; pyruvate from D-glyceraldehyde 3-phosphate: step 4/5. In terms of biological role, catalyzes the reversible conversion of 2-phosphoglycerate (2-PG) into phosphoenolpyruvate (PEP). It is essential for the degradation of carbohydrates via glycolysis. The chain is Enolase from Campylobacter fetus.